A 209-amino-acid chain; its full sequence is Chloramphenicol acetyltransferase (209 aa).

H78 is a catalytic residue.

The protein belongs to the transferase hexapeptide repeat family.

The catalysed reaction is chloramphenicol + acetyl-CoA = chloramphenicol 3-acetate + CoA. In terms of biological role, this enzyme is an effector of chloramphenicol resistance in bacteria. The chain is Chloramphenicol acetyltransferase (cat) from Agrobacterium fabrum (strain C58 / ATCC 33970) (Agrobacterium tumefaciens (strain C58)).